Here is a 74-residue protein sequence, read N- to C-terminus: MATKSKYQDKQIEALLNDLIVTLEKHKAPVDLSLMALGNMITNILVTNVQSPQQREVLAEAFSSALKNSLKSAK.

It belongs to the UPF0352 family.

This Glaesserella parasuis serovar 5 (strain SH0165) (Haemophilus parasuis) protein is UPF0352 protein HAPS_0210.